The primary structure comprises 301 residues: GTPase Era (301 aa).

One can recognise an Era-type G domain in the interval 7–175; sequence YCGFIAIVGR…AAIVRKHLPE (169 aa). The interval 15-22 is G1; that stretch reads GRPNVGKS. A GTP-binding site is contributed by 15–22; sequence GRPNVGKS. The tract at residues 41–45 is G2; sequence QTTRH. The G3 stretch occupies residues 62–65; that stretch reads DTPG. Residues 62 to 66 and 124 to 127 each bind GTP; these read DTPGL and NKVD. Residues 124–127 are G4; that stretch reads NKVD. A G5 region spans residues 154 to 156; that stretch reads ISA. A KH type-2 domain is found at 206–283; sequence LGAELPYSVT…HLELWVKVKS (78 aa).

Belongs to the TRAFAC class TrmE-Era-EngA-EngB-Septin-like GTPase superfamily. Era GTPase family. In terms of assembly, monomer.

Its subcellular location is the cytoplasm. The protein localises to the cell inner membrane. In terms of biological role, an essential GTPase that binds both GDP and GTP, with rapid nucleotide exchange. Plays a role in 16S rRNA processing and 30S ribosomal subunit biogenesis and possibly also in cell cycle regulation and energy metabolism. This is GTPase Era from Shigella dysenteriae serotype 1 (strain Sd197).